The sequence spans 101 residues: Chaperone modulatory protein CbpM (101 aa).

This sequence belongs to the CbpM family.

Its function is as follows. Interacts with CbpA and inhibits both the DnaJ-like co-chaperone activity and the DNA binding activity of CbpA. Together with CbpA, modulates the activity of the DnaK chaperone system. Does not inhibit the co-chaperone activity of DnaJ. The chain is Chaperone modulatory protein CbpM from Pseudomonas putida (strain W619).